Here is a 441-residue protein sequence, read N- to C-terminus: DNA primase DnaG (441 aa).

The Toprim domain occupies 165–241 (DTIIIVEGRA…DIDYVARAPP (77 aa)). Mg(2+) contacts are provided by Glu171, Asp215, and Asp217. Basic and acidic residues predominate over residues 299 to 315 (KEEVAERGEEMESKAEG). The tract at residues 299–320 (KEEVAERGEEMESKAEGAEQPT) is disordered.

Belongs to the archaeal DnaG primase family. In terms of assembly, forms a ternary complex with MCM helicase and DNA. Component of the archaeal exosome complex. The cofactor is Mg(2+).

It catalyses the reaction ssDNA + n NTP = ssDNA/pppN(pN)n-1 hybrid + (n-1) diphosphate.. RNA polymerase that catalyzes the synthesis of short RNA molecules used as primers for DNA polymerase during DNA replication. Also part of the exosome, which is a complex involved in RNA degradation. Acts as a poly(A)-binding protein that enhances the interaction between heteromeric, adenine-rich transcripts and the exosome. The chain is DNA primase DnaG from Ignicoccus hospitalis (strain KIN4/I / DSM 18386 / JCM 14125).